The following is an 868-amino-acid chain: MREKPEGGKGMAEHTPLMKQYFAAKAEYPDLLLFFRMGDFYELFHQDARKAARLLDITLTQRGSSGGAPIPMAGVPVHAYEGYLARLIALGESVAICEQIGDPGLAKGLVERKVVRIVTPGTITDEVLLEERRDTLLMALSRSKNCYGLAWADLAGGRFLVNEVNSEEALEAELARLEPAELLLPDEDAWPEYLQQRNGVRRRPPWLFDADSGRRKLLAFFKLHDLSGFGIENNPQATAAAGALLGYIEETQKQRLPHLTSITMETVGEAITMNAATRRHLELDTRVDGESRHTLLGVLDSTVTPMGGRLLRRWLHRPLRLREVVRQRHAAVGSMIDRDLDNKLMETFRRLGDMERILTRVALRSARPRDISTLRDSLSLLPRLRELLNASDSPRLRVLYAELGEHDSTASLLVKAVAEQPPLKLTDGGVIASEYDVELDELRKLSNNADQFLIDLETRERESSGISTLKVGYNRVHGYYIEISKGQADKAPVHYTRRQTLTNAERYITEELKAFEDKVLSARDRALVREKLLYEQLLDTVGAQLEPLKRCAAALSELDVLVCFAERAQTLDWVRPELEHTSCLHIEGGRHPVVEAVREQRFEPNDLDLHPERRMLVITGPNMGGKSTYMRQNALIVLLAYIGSYVPASRALIGPIDRIMTRIGAGDDLARGQSTFMLEMTETSYILHHATAQSLVLMDEIGRGTSTYDGLALADAVARHLAHINRCYTLFATHYFELTALADETYEGGLSGIANVHFDAVEHSERLVFMHTVKDGPANRSFGLQVAALAGLPAAAVAHARRRLAELEQRGRESHVSEITPLALDAPQQCSLFASAPSAAQEALVALHPDELTPKQALEALYRLKALL.

Residue 620-627 participates in ATP binding; the sequence is GPNMGGKS.

It belongs to the DNA mismatch repair MutS family.

Functionally, this protein is involved in the repair of mismatches in DNA. It is possible that it carries out the mismatch recognition step. This protein has a weak ATPase activity. The polypeptide is DNA mismatch repair protein MutS (Xylella fastidiosa (strain 9a5c)).